A 199-amino-acid polypeptide reads, in one-letter code: Adenylate kinase (199 aa).

8–13 contacts ATP; the sequence is GAGKGT. The NMP stretch occupies residues 28–57; that stretch reads STGDIFRANIKNKTELGQQVKAIVDAGDYV. Residues threonine 29, arginine 34, 55 to 57, 83 to 86, and glutamine 90 each bind AMP; these read DYV and GYPR. Residues 124–134 form an LID region; the sequence is KRAREQGRADD. ATP is bound at residue arginine 125. Positions 131 and 142 each coordinate AMP. Glycine 170 lines the ATP pocket.

It belongs to the adenylate kinase family. Monomer.

The protein localises to the cytoplasm. It catalyses the reaction AMP + ATP = 2 ADP. It participates in purine metabolism; AMP biosynthesis via salvage pathway; AMP from ADP: step 1/1. In terms of biological role, catalyzes the reversible transfer of the terminal phosphate group between ATP and AMP. Plays an important role in cellular energy homeostasis and in adenine nucleotide metabolism. The chain is Adenylate kinase from Leifsonia xyli subsp. xyli (strain CTCB07).